The following is a 152-amino-acid chain: Transcriptional regulator MraZ (152 aa).

2 consecutive SpoVT-AbrB domains span residues 5 to 52 and 81 to 124; these read ATLV…PLPE and ASEC…DEQT.

This sequence belongs to the MraZ family. As to quaternary structure, forms oligomers.

It is found in the cytoplasm. Its subcellular location is the nucleoid. Functionally, negatively regulates its own expression and that of the subsequent genes in the proximal part of the division and cell wall (dcw) gene cluster. Acts by binding directly to DNA. May also regulate the expression of genes outside the dcw cluster. This Erwinia tasmaniensis (strain DSM 17950 / CFBP 7177 / CIP 109463 / NCPPB 4357 / Et1/99) protein is Transcriptional regulator MraZ.